Reading from the N-terminus, the 647-residue chain is A-type voltage-gated potassium channel KCND1 (647 aa).

Over 1–183 (MAAGVATWLP…RAFENPHTST (183 aa)) the chain is Cytoplasmic. Residues 2–20 (AAGVATWLPFARAAAVGWL) form an interaction with KCNIP1, KCNIP2, and other family members region. His-104, Cys-131, and Cys-132 together coordinate Zn(2+). Positions 144-164 (AQRLAEDEEAEQTGDGPALPA) are disordered. The chain crosses the membrane as a helical span at residues 184-205 (AALVFYYVTGFFIAVSVIANVV). Over 206-230 (ETIPCRGPARRPPREQPCGDRFPLA) the chain is Extracellular. The helical transmembrane segment at 231–252 (FFCMDTACVLIFTGEYLLRLFA) threads the bilayer. Over 253–263 (APSRCRFLRSV) the chain is Cytoplasmic. Residues 264–284 (MSLIDVVAILPYYIGLLVPKN) traverse the membrane as a helical segment. Over 285-287 (EDV) the chain is Extracellular. Residues 288–308 (SGAFVTLRVFRVFRIFKFSRH) form a helical; Voltage-sensor membrane-spanning segment. Topologically, residues 309–323 (SQGLRILGYTLKSCA) are cytoplasmic. Residues 310-323 (QGLRILGYTLKSCA) form an S4-S5 linker region. A helical transmembrane segment spans residues 324–345 (SELGFLLFSLTMAIIIFATVMF). The Extracellular segment spans residues 346–359 (YAEKGTSKTNFTSI). An intramembrane region (helical) is located at residues 360 to 371 (PAAFWYTIVTMT). Residues 372–377 (TLGYGD) carry the Selectivity filter motif. An intramembrane segment occupies 372–379 (TLGYGDMV). The Extracellular portion of the chain corresponds to 380–386 (PSTIAGK). Residues 387 to 415 (IFGSICSLSGVLVIALPVPVIVSNFSRIY) traverse the membrane as a helical segment. Topologically, residues 416–647 (HQNQRADKRR…LPETVKISSL (232 aa)) are cytoplasmic. Residues 474–489 (FEQQHHHLLHCLEKTT) are required for dendritic targeting. Over residues 510-520 (GRTSRSTSVSS) the composition is skewed to low complexity. Residues 510–531 (GRTSRSTSVSSQPVGPSSLLSS) are disordered. Over residues 521–530 (QPVGPSSLLS) the composition is skewed to polar residues. A Phosphoserine modification is found at Ser-555. Disordered regions lie at residues 564-584 (GLRR…PHDS) and 601-634 (IPTP…RLGT).

The protein belongs to the potassium channel family. D (Shal) (TC 1.A.1.2) subfamily. Kv4.1/KCND1 sub-subfamily. As to quaternary structure, component of heteromultimeric potassium channels. Identified in potassium channel complexes containing KCND1, KCND2, KCND3, KCNIP1, KCNIP2, KCNIP3, KCNIP4, DPP6 and DPP10. Detected in carotid body chemoreceptor cells and in frontal cortex.

The protein resides in the cell membrane. It catalyses the reaction K(+)(in) = K(+)(out). Its function is as follows. A-type voltage-gated potassium channel that mediates transmembrane potassium transport in excitable membranes in the brain. Mediates A-type current I(SA) in suprachiasmatic nucleus (SCN) neurons. Exhibits a low-threshold A-type current with a hyperpolarized steady-state inactivation midpoint and the recovery process was steeply voltage-dependent, with recovery being markedly faster at more negative potentials. May regulates repetitive firing rates in the suprachiasmatic nucleus (SCN) neurons and circadian rhythms in neuronal excitability and behavior. Contributes to the regulation of the circadian rhythm of action potential firing in suprachiasmatic nucleus neurons, which regulates the circadian rhythm of locomotor activity. The regulatory subunit KCNIP1 modulates the kinetics of channel inactivation, increases the current amplitudes and accelerates recovery from inactivation, shifts activation in a depolarizing direction. The regulatory subunit DPP10 decreases the voltage sensitivity of the inactivation channel gating. The chain is A-type voltage-gated potassium channel KCND1 from Oryctolagus cuniculus (Rabbit).